The sequence spans 405 residues: Maintenance of mitochondrial morphology protein 1 (405 aa).

The Lumenal portion of the chain corresponds to 1–86 (MQVLNFYVNP…TGSTKSFTQG (86 aa)). The helical transmembrane segment at 87–107 (LIIGQLSVIILLGIFIKFFVF) threads the bilayer. The Cytoplasmic segment spans residues 108-405 (ADSSTTSSTS…QPVSTTESDH (298 aa)). Residues 166–385 (APESLDWFNV…EPRFQVVKLP (220 aa)) enclose the SMP-LTD domain. The segment at 303-324 (SEPRVAMDSPQSTRDDNSEEPN) is disordered.

It belongs to the MMM1 family. In terms of assembly, homodimer. Component of the ER-mitochondria encounter structure (ERMES) or MDM complex, composed of MMM1, MDM10, MDM12 and MDM34. An MMM1 homodimer associates with one molecule of MDM12 on each side in a pairwise head-to-tail manner, and the SMP-LTD domains of MMM1 and MDM12 generate a continuous hydrophobic tunnel for phospholipid trafficking.

The protein localises to the endoplasmic reticulum membrane. Functionally, component of the ERMES/MDM complex, which serves as a molecular tether to connect the endoplasmic reticulum (ER) and mitochondria. Components of this complex are involved in the control of mitochondrial shape and protein biogenesis, and function in nonvesicular lipid trafficking between the ER and mitochondria. The MDM12-MMM1 subcomplex functions in the major beta-barrel assembly pathway that is responsible for biogenesis of all outer membrane beta-barrel proteins, and acts in a late step after the SAM complex. The MDM10-MDM12-MMM1 subcomplex further acts in the TOM40-specific pathway after the action of the MDM12-MMM1 complex. Essential for establishing and maintaining the structure of mitochondria and maintenance of mtDNA nucleoids. This chain is Maintenance of mitochondrial morphology protein 1, found in Meyerozyma guilliermondii (strain ATCC 6260 / CBS 566 / DSM 6381 / JCM 1539 / NBRC 10279 / NRRL Y-324) (Yeast).